The following is a 276-amino-acid chain: NADPH-dependent 7-cyano-7-deazaguanine reductase (276 aa).

Residue 83–85 (IES) participates in substrate binding. 85–86 (SK) provides a ligand contact to NADPH. C184 (thioimide intermediate) is an active-site residue. The active-site Proton donor is the D191. Substrate is bound at residue 223-224 (HE). Residue 252–253 (RG) coordinates NADPH.

Belongs to the GTP cyclohydrolase I family. QueF type 2 subfamily. Homodimer.

Its subcellular location is the cytoplasm. The enzyme catalyses 7-aminomethyl-7-carbaguanine + 2 NADP(+) = 7-cyano-7-deazaguanine + 2 NADPH + 3 H(+). The protein operates within tRNA modification; tRNA-queuosine biosynthesis. Functionally, catalyzes the NADPH-dependent reduction of 7-cyano-7-deazaguanine (preQ0) to 7-aminomethyl-7-deazaguanine (preQ1). In Pseudomonas syringae pv. syringae (strain B728a), this protein is NADPH-dependent 7-cyano-7-deazaguanine reductase.